We begin with the raw amino-acid sequence, 124 residues long: Fluoride-specific ion channel FluC (124 aa).

Helical transmembrane passes span 4–24 (VLYIAVFGALGCLSRYYLSGW), 32–52 (AFPYGTFAVNIVGAFCIGLIM), 67–87 (IGLTIGFLGGLTTFSTFSYET), and 101–121 (ANVLFSVMTCLVFTWLGIIVA). Positions 75 and 78 each coordinate Na(+).

This sequence belongs to the fluoride channel Fluc/FEX (TC 1.A.43) family.

The protein resides in the cell inner membrane. The enzyme catalyses fluoride(in) = fluoride(out). Its activity is regulated as follows. Na(+) is not transported, but it plays an essential structural role and its presence is essential for fluoride channel function. Functionally, fluoride-specific ion channel. Important for reducing fluoride concentration in the cell, thus reducing its toxicity. This is Fluoride-specific ion channel FluC from Geotalea uraniireducens (strain Rf4) (Geobacter uraniireducens).